A 455-amino-acid chain; its full sequence is Proline--tRNA ligase (455 aa).

L-proline is bound by residues Thr-101, Glu-103, and Arg-132. The ATP site is built by Arg-132, Glu-134, Gln-216, and Thr-219. His-221 lines the L-proline pocket. 2 residues coordinate ATP: Ser-253 and Arg-255. An interaction with tRNA region spans residues 329–359; it reads EIKGVPLRIEVGPKDIENKKITLFRRDTMEK.

This sequence belongs to the class-II aminoacyl-tRNA synthetase family. ProS type 3 subfamily. In terms of assembly, homodimer. The dimer is functionally asymmetric: only one of the two active sites at a time is able to form prolyl-adenylate, and only one tRNA molecule binds per dimer.

The protein localises to the cytoplasm. The catalysed reaction is tRNA(Pro) + L-proline + ATP = L-prolyl-tRNA(Pro) + AMP + diphosphate. With respect to regulation, inhibited by high concentrations of prolinamide. Catalyzes the attachment of proline to tRNA(Pro) in a two-step reaction: proline is first activated by ATP to form Pro-AMP and then transferred to the acceptor end of tRNA(Pro). Can inadvertently accommodate and process non-cognate amino acids such as cysteine and alanine. The sequence is that of Proline--tRNA ligase (proS) from Methanocaldococcus jannaschii (strain ATCC 43067 / DSM 2661 / JAL-1 / JCM 10045 / NBRC 100440) (Methanococcus jannaschii).